The primary structure comprises 229 residues: 2-C-methyl-D-erythritol 4-phosphate cytidylyltransferase (229 aa).

The protein belongs to the IspD/TarI cytidylyltransferase family. IspD subfamily.

The enzyme catalyses 2-C-methyl-D-erythritol 4-phosphate + CTP + H(+) = 4-CDP-2-C-methyl-D-erythritol + diphosphate. It functions in the pathway isoprenoid biosynthesis; isopentenyl diphosphate biosynthesis via DXP pathway; isopentenyl diphosphate from 1-deoxy-D-xylulose 5-phosphate: step 2/6. Functionally, catalyzes the formation of 4-diphosphocytidyl-2-C-methyl-D-erythritol from CTP and 2-C-methyl-D-erythritol 4-phosphate (MEP). The chain is 2-C-methyl-D-erythritol 4-phosphate cytidylyltransferase from Clostridium botulinum (strain ATCC 19397 / Type A).